A 628-amino-acid polypeptide reads, in one-letter code: 1-deoxy-D-xylulose-5-phosphate synthase (628 aa).

Thiamine diphosphate is bound by residues His-77 and 118–120 (GHS). Residue Asp-150 participates in Mg(2+) binding. Thiamine diphosphate-binding positions include 151–152 (GA), Asn-180, Tyr-288, and Glu-369. Asn-180 provides a ligand contact to Mg(2+).

It belongs to the transketolase family. DXPS subfamily. Homodimer. Mg(2+) serves as cofactor. Requires thiamine diphosphate as cofactor.

The enzyme catalyses D-glyceraldehyde 3-phosphate + pyruvate + H(+) = 1-deoxy-D-xylulose 5-phosphate + CO2. It functions in the pathway metabolic intermediate biosynthesis; 1-deoxy-D-xylulose 5-phosphate biosynthesis; 1-deoxy-D-xylulose 5-phosphate from D-glyceraldehyde 3-phosphate and pyruvate: step 1/1. Functionally, catalyzes the acyloin condensation reaction between C atoms 2 and 3 of pyruvate and glyceraldehyde 3-phosphate to yield 1-deoxy-D-xylulose-5-phosphate (DXP). This Aquifex aeolicus (strain VF5) protein is 1-deoxy-D-xylulose-5-phosphate synthase.